A 700-amino-acid chain; its full sequence is Polyphosphate kinase (700 aa).

N45 lines the ATP pocket. Positions 373 and 403 each coordinate Mg(2+). Residues 428 to 462 enclose the PLD phosphodiesterase 1 domain; that stretch reads PGMKIHAKLLLITRREEQGFVRYAHIGTGNFHERT. H433 serves as the catalytic Phosphohistidine intermediate. Positions 466, 562, and 590 each coordinate ATP. One can recognise a PLD phosphodiesterase 2 domain in the interval 585–615; it reads DRFLEHPRVLVVHNDGDPQVFISSADWMERN.

It belongs to the polyphosphate kinase 1 (PPK1) family. It depends on Mg(2+) as a cofactor. An intermediate of this reaction is the autophosphorylated ppk in which a phosphate is covalently linked to a histidine residue through a N-P bond.

It catalyses the reaction [phosphate](n) + ATP = [phosphate](n+1) + ADP. Its function is as follows. Catalyzes the reversible transfer of the terminal phosphate of ATP to form a long-chain polyphosphate (polyP). The chain is Polyphosphate kinase from Vibrio vulnificus (strain YJ016).